The primary structure comprises 117 residues: Large ribosomal subunit protein bL20 (117 aa).

The protein belongs to the bacterial ribosomal protein bL20 family.

Its function is as follows. Binds directly to 23S ribosomal RNA and is necessary for the in vitro assembly process of the 50S ribosomal subunit. It is not involved in the protein synthesizing functions of that subunit. The polypeptide is Large ribosomal subunit protein bL20 (Rickettsia rickettsii (strain Iowa)).